The following is a 511-amino-acid chain: Fusicocca-1,10(14)-diene-8beta,16-diol C-9 hydroxylase (511 aa).

The chain crosses the membrane as a helical span at residues 7 to 29 (TVAALAAVFVAGTLLSRLASWIR). N-linked (GlcNAc...) asparagine glycans are attached at residues Asn64, Asn163, and Asn343. Cys450 contacts heme.

Belongs to the cytochrome P450 family. Heme is required as a cofactor.

It localises to the membrane. It participates in mycotoxin biosynthesis. Cytochrome P450 monooxygenase; part of the 2 gene clusters that mediate the biosynthesis of fusicoccins, diterpene glucosides that display phytohormone-like activity and function as potent activators of plasma membrane H(+)-ATPases in plants by modifying 14-3-3 proteins and cause the plant disease constriction canker. The first step in the pathway is performed by the fusicoccadiene synthase PaFS that possesses both prenyl transferase and terpene cyclase activity, converting isopentenyl diphosphate and dimethylallyl diphosphate into geranylgeranyl diphosphate (GGDP) and successively converting GGDP into fusicocca-2,10(14)-diene, a precursor for fusicoccin H. The second step is the oxidation at the C-8 position by the cytochrome P450 monooxygenase PaP450-2 to yield fusicocca-2,10(14)-diene-8-beta-ol. The cytochrome P450 monooxygenase PaP450-1 then catalyzes the hydroxylation at the C-16 position to produce fusicocca-2,10(14)-diene-8-beta,16-diol. The dioxygenase fc-dox then catalyzes the 16-oxydation of fusicocca-2,10(14)-diene-8-beta,16-diol to yield an aldehyde (8-beta-hydroxyfusicocca-1,10(14)-dien-16-al). The short-chain dehydrogenase/reductase fc-sdr catalyzes the reduction of the aldehyde to yield fusicocca-1,10(14)-diene-8-beta,16-diol. The next step is the hydroxylation at C-9 performed by the cytochrome P450 monooxygenase PaP450-3 that leads to fusicoccin H aglycon which is glycosylated to fusicoccin H by the O-glycosyltransferase PaGT. Hydroxylation at C-12 by the cytochrome P450 monooxygenase PaP450-4 leads then to the production of fusicoccin Q and is followed by methylation by the O-methyltransferase PaMT to yield fusicoccin P. Fusicoccin P is further converted to fusicoccin J via prenylation by the O-glucose prenyltransferase PaPT. Cytochrome P450 monooxygenase PaP450-5 then performs hydroxylation at C-19 to yield dideacetyl-fusicoccin A which is acetylated to 3'-O-deacetyl-fusicoccin A by the O-acetyltransferase PaAT-2. Finally, a another acetylation by the O-acetyltransferase PaAT-1 yields fusicoccin A. This is Fusicocca-1,10(14)-diene-8beta,16-diol C-9 hydroxylase from Phomopsis amygdali (Fusicoccum amygdali).